Consider the following 335-residue polypeptide: Nucleoid-associated protein CKO_00588 (335 aa).

Belongs to the YejK family.

The protein localises to the cytoplasm. It localises to the nucleoid. This chain is Nucleoid-associated protein CKO_00588, found in Citrobacter koseri (strain ATCC BAA-895 / CDC 4225-83 / SGSC4696).